The primary structure comprises 858 residues: Leucine--tRNA ligase (858 aa).

The short motif at 42-52 (PYPSGRLHMGH) is the 'HIGH' region element. The 'KMSKS' region signature appears at 618–622 (KMSKS). Position 621 (lysine 621) interacts with ATP.

Belongs to the class-I aminoacyl-tRNA synthetase family.

It is found in the cytoplasm. It carries out the reaction tRNA(Leu) + L-leucine + ATP = L-leucyl-tRNA(Leu) + AMP + diphosphate. This chain is Leucine--tRNA ligase, found in Aliivibrio fischeri (strain ATCC 700601 / ES114) (Vibrio fischeri).